The primary structure comprises 634 residues: Chaperone protein HtpG (634 aa).

The a; substrate-binding stretch occupies residues 1–342 (MTVDTDKQTL…SADLSLNVSR (342 aa)). Residues 343–559 (EILQSGPVVD…QGDLGLQMRQ (217 aa)) form a b region. Residues 560–634 (LLEASGQAVP…LNKLLLELSA (75 aa)) form a c region.

This sequence belongs to the heat shock protein 90 family. In terms of assembly, homodimer.

It is found in the cytoplasm. In terms of biological role, molecular chaperone. Has ATPase activity. This is Chaperone protein HtpG from Xanthomonas campestris pv. campestris (strain ATCC 33913 / DSM 3586 / NCPPB 528 / LMG 568 / P 25).